A 397-amino-acid chain; its full sequence is ATP-dependent RNA helicase eIF4A (397 aa).

The short motif at 23 to 51 is the Q motif element; sequence YTFDDLNLKPNIVRGIFGYGYESPSAIQQ. One can recognise a Helicase ATP-binding domain in the interval 54–224; it reads ILPITEGRDV…TKFMNNPVRI (171 aa). 67 to 74 is an ATP binding site; it reads AQSGTGKT. The short motif at 172–175 is the DEAD box element; sequence DEAD. One can recognise a Helicase C-terminal domain in the interval 235-396; that stretch reads GIKQFYINVE…EMPADIGALF (162 aa).

The protein belongs to the DEAD box helicase family. eIF4A subfamily. Component of the eIF4F complex, which composition varies with external and internal environmental conditions. It is composed of at least eIF4A, eIF4E and eIF4G.

The protein resides in the cytoplasm. The enzyme catalyses ATP + H2O = ADP + phosphate + H(+). ATP-dependent RNA helicase which is a subunit of the eIF4F complex involved in cap recognition and is required for mRNA binding to ribosome. In the current model of translation initiation, eIF4A unwinds RNA secondary structures in the 5'-UTR of mRNAs which is necessary to allow efficient binding of the small ribosomal subunit, and subsequent scanning for the initiator codon. The chain is ATP-dependent RNA helicase eIF4A (TIF1) from Debaryomyces hansenii (strain ATCC 36239 / CBS 767 / BCRC 21394 / JCM 1990 / NBRC 0083 / IGC 2968) (Yeast).